Here is a 111-residue protein sequence, read N- to C-terminus: WAP four-disulfide core domain protein 12 (111 aa).

Residues 1-23 form the signal peptide; that stretch reads MGSSSFLVLMVSLVLVTLVAVEG. The region spanning 27–74 is the WAP domain; the sequence is GIEKAGVCPADNVRCFKSDPPQCHTDQDCLGERKCCYLHCGFKCVIPV. 4 disulfides stabilise this stretch: Cys34/Cys62, Cys41/Cys66, Cys49/Cys61, and Cys55/Cys70. Positions 80 to 111 are disordered; sequence GGNKDEDVSRPYPEPGWEAKCPGSSSTRCPQK. The segment covering 102 to 111 has biased composition (polar residues); that stretch reads GSSSTRCPQK.

In terms of tissue distribution, highly expressed in prostate, skin, lung and esophagus. Weakly expressed in skeletal muscle, epididymis, kidney, trachea, salivary gland, testis and seminal vesicle.

It localises to the secreted. Functionally, antibacterial protein. Putative acid-stable proteinase inhibitor. The sequence is that of WAP four-disulfide core domain protein 12 (WFDC12) from Homo sapiens (Human).